The chain runs to 232 residues: Mediator of RNA polymerase II transcription subunit 18 (232 aa).

It belongs to the Mediator complex subunit 18 family. Component of the Mediator complex.

Its subcellular location is the nucleus. In terms of biological role, component of the Mediator complex, a coactivator involved in the regulated transcription of nearly all RNA polymerase II-dependent genes. Mediator functions as a bridge to convey information from gene-specific regulatory proteins to the basal RNA polymerase II transcription machinery. Mediator is recruited to promoters by direct interactions with regulatory proteins and serves as a scaffold for the assembly of a functional preinitiation complex with RNA polymerase II and the general transcription factors. The protein is Mediator of RNA polymerase II transcription subunit 18 (mdt-18) of Caenorhabditis elegans.